The chain runs to 230 residues: Sugar fermentation stimulation protein homolog (230 aa).

The protein belongs to the SfsA family.

This is Sugar fermentation stimulation protein homolog from Clostridium perfringens (strain 13 / Type A).